A 77-amino-acid chain; its full sequence is Acyl carrier protein (77 aa).

Positions 1–76 constitute a Carrier domain; that stretch reads MENFDKVKDI…DAVNFINNLE (76 aa). Ser36 bears the O-(pantetheine 4'-phosphoryl)serine mark.

This sequence belongs to the acyl carrier protein (ACP) family. 4'-phosphopantetheine is transferred from CoA to a specific serine of apo-ACP by AcpS. This modification is essential for activity because fatty acids are bound in thioester linkage to the sulfhydryl of the prosthetic group.

Its subcellular location is the cytoplasm. It functions in the pathway lipid metabolism; fatty acid biosynthesis. Carrier of the growing fatty acid chain in fatty acid biosynthesis. In Staphylococcus carnosus (strain TM300), this protein is Acyl carrier protein.